The sequence spans 210 residues: Large ribosomal subunit protein uL3 (210 aa).

Residues 139-165 are disordered; it reads AEKVHRSPGSIGHATFPGKVFKGKKMP.

This sequence belongs to the universal ribosomal protein uL3 family. As to quaternary structure, part of the 50S ribosomal subunit. Forms a cluster with proteins L14 and L19.

In terms of biological role, one of the primary rRNA binding proteins, it binds directly near the 3'-end of the 23S rRNA, where it nucleates assembly of the 50S subunit. The chain is Large ribosomal subunit protein uL3 from Maridesulfovibrio salexigens (strain ATCC 14822 / DSM 2638 / NCIMB 8403 / VKM B-1763) (Desulfovibrio salexigens).